A 375-amino-acid polypeptide reads, in one-letter code: Odorant receptor 10 (375 aa).

Transmembrane regions (helical) follow at residues 32-52 (ISII…GHSW), 58-78 (VIIK…TLIL), 125-145 (NLAL…FTGV), 167-187 (IIYL…IPFT), 250-270 (YICF…LFLL), and 279-299 (IVIV…FYWH).

Belongs to the insect chemoreceptor superfamily. Heteromeric odorant receptor channel (TC 1.A.69) family. Expressed in female antenna, maxillary palp and proboscis. Expressed in female body. Expressed in male tissues.

It is found in the cell membrane. Odorant receptor which complexes with Orco, a coreceptor, to form odorant-sensing units, providing sensitive and prolonged odorant signaling and calcium permeability. Can sense indole, 1-octen-3-ol, 3-methyindole and an insect repellent DEET. The chain is Odorant receptor 10 from Aedes albopictus (Asian tiger mosquito).